Reading from the N-terminus, the 330-residue chain is MEHLGPHHLHPGHAEPISFGIDQILNSPDQGGCMGPASRLQDGEYGLGCLVGGAYTYGGGGSAAATGAGGAGAYGTGGPGGPGGPAGGGGACSMGPLTGSYNVNMALAGGPGPGGGGGSSGGAGALSAAGVIRVPAHRPLAGAVAHPQPLATGLPTVPSVPAMPGVNNLTGLTFPWMESNRRYTKDRFTGHPYQNRTPPKKKKPRTSFTRLQICELEKRFHRQKYLASAERAALAKALKMTDAQVKTWFQNRRTKWRRQTAEEREAERQQANRILLQLQQEAFQKSLAQPLPADPLCVHNSSLFALQNLQPWSDDSTKITSVTSVASACE.

The disordered stretch occupies residues 186-207 (DRFTGHPYQNRTPPKKKKPRTS). The segment at residues 201–260 (KKKPRTSFTRLQICELEKRFHRQKYLASAERAALAKALKMTDAQVKTWFQNRRTKWRRQT) is a DNA-binding region (homeobox). An N6-acetyllysine modification is found at Lys-236.

Interacts with MEIS1, MEIS2, PBX1, PBX2 and PBX3.

The protein localises to the nucleus. Functionally, controls the genesis of the spleen. Binds to the DNA sequence 5'-GGCGGTAAGTGG-3'. The protein is T-cell leukemia homeobox protein 1 (TLX1) of Homo sapiens (Human).